The sequence spans 2201 residues: Genome polyprotein (2201 aa).

The N-myristoyl glycine; by host moiety is linked to residue Gly2. Residues 2-1511 (GAQVSTQKTG…YVSRAFICLQ (1510 aa)) lie on the Cytoplasmic side of the membrane. Residues 566–582 (KLQGDVEEAIERARCTV) are amphipathic alpha-helix. Positions 858–860 (RGD) match the Cell attachment site motif. Active-site for protease 2A activity residues include His888 and Asp906. Residues Cys923 and Cys925 each contribute to the Zn(2+) site. Cys977 (for protease 2A activity) is an active-site residue. Zn(2+) contacts are provided by Cys983 and His985. The tract at residues 1117 to 1189 (NDSWLKKFTE…EQSAPSQSDQ (73 aa)) is membrane-binding. The interval 1117–1255 (NDSWLKKFTE…SPGAGKSVAT (139 aa)) is oligomerization. The segment at 1138 to 1142 (AIKIQ) is RNA-binding. Residues 1221-1377 (EKKMSNYIQF…SMYSQNGKIN (157 aa)) enclose the SF3 helicase domain. Cys1385, Cys1397, and Cys1402 together coordinate Zn(2+). Residues 1385 to 1402 (CDEECCPVNFKKCCPLVC) form a C4-type; degenerate zinc finger. The segment at 1429–1436 (EYNHRHSV) is RNA-binding. Residues 1440–1445 (LEALFQ) form an oligomerization region. Residues 1512-1527 (AITTFVSVAGIIYIIY) lie within the membrane without spanning it. The Cytoplasmic portion of the chain corresponds to 1528–2201 (KLFAGFQGAY…TLRRKWLDSF (674 aa)). The residue at position 1537 (Tyr1537) is an O-(5'-phospho-RNA)-tyrosine. Positions 1557-1735 (GPAFEFAVAM…FSAALLKHYF (179 aa)) constitute a Peptidase C3 domain. Residues His1596, Glu1627, and Cys1703 each act as for protease 3C activity in the active site. Positions 1966–2082 (GHLIAFDYSG…SYPWPIDASL (117 aa)) constitute a RdRp catalytic domain. Positions 1972 and 2068 each coordinate Mg(2+).

It belongs to the picornaviruses polyprotein family. In terms of assembly, interacts with capsid protein VP1 and capsid protein VP3 to form heterotrimeric protomers. Interacts with capsid protein VP0, and capsid protein VP3 to form heterotrimeric protomers. Five protomers subsequently associate to form pentamers which serve as building blocks for the capsid. Interacts with capsid protein VP2, capsid protein VP3 and capsid protein VP4 following cleavage of capsid protein VP0. Interacts with host integrin heterodimer ITGAV/ITGB6. As to quaternary structure, interacts with capsid protein VP1 and capsid protein VP3 in the mature capsid. In terms of assembly, interacts with capsid protein VP0 and capsid protein VP1 to form heterotrimeric protomers. Five protomers subsequently associate to form pentamers which serve as building blocks for the capsid. Interacts with capsid protein VP4 in the mature capsid. Interacts with protein 2C; this interaction may be important for virion morphogenesis. Interacts with capsid protein VP1 and capsid protein VP3. As to quaternary structure, homodimer. In terms of assembly, homohexamer; forms a hexameric ring structure with 6-fold symmetry characteristic of AAA+ ATPases. Interacts (via N-terminus) with host RTN3 (via reticulon domain); this interaction is important for viral replication. Interacts with capsid protein VP3; this interaction may be important for virion morphogenesis. Interacts with protein 3CD. As to quaternary structure, homodimer. Interacts with host GBF1. Interacts (via GOLD domain) with host ACBD3 (via GOLD domain); this interaction allows the formation of a viral protein 3A/ACBD3 heterotetramer with a 2:2 stoichiometry, which will stimulate the recruitment of host PI4KB in order to synthesize PI4P at the viral RNA replication sites. In terms of assembly, interacts with RNA-directed RNA polymerase. Interacts with protein 3AB and with RNA-directed RNA polymerase. As to quaternary structure, interacts with Viral protein genome-linked and with protein 3CD. Mg(2+) serves as cofactor. Specific enzymatic cleavages in vivo by the viral proteases yield processing intermediates and the mature proteins. In terms of processing, myristoylation is required for the formation of pentamers during virus assembly. Further assembly of 12 pentamers and a molecule of genomic RNA generates the provirion. Post-translationally, during virion maturation, immature virions are rendered infectious following cleavage of VP0 into VP4 and VP2. This maturation seems to be an autocatalytic event triggered by the presence of RNA in the capsid and it is followed by a conformational change infectious virion. Myristoylation is required during RNA encapsidation and formation of the mature virus particle. In terms of processing, VPg is uridylylated by the polymerase into VPg-pUpU. This acts as a nucleotide-peptide primer for the genomic RNA replication.

The protein localises to the virion. The protein resides in the host cytoplasm. It is found in the host cytoplasmic vesicle membrane. It localises to the host nucleus. The enzyme catalyses a ribonucleoside 5'-triphosphate + H2O = a ribonucleoside 5'-diphosphate + phosphate + H(+). It carries out the reaction Selective cleavage of Tyr-|-Gly bond in the picornavirus polyprotein.. It catalyses the reaction RNA(n) + a ribonucleoside 5'-triphosphate = RNA(n+1) + diphosphate. The catalysed reaction is Selective cleavage of Gln-|-Gly bond in the poliovirus polyprotein. In other picornavirus reactions Glu may be substituted for Gln, and Ser or Thr for Gly.. With respect to regulation, replication or transcription is subject to high level of random mutations by the nucleotide analog ribavirin. Its function is as follows. Forms an icosahedral capsid of pseudo T=3 symmetry with capsid proteins VP2 and VP3. The capsid is 300 Angstroms in diameter, composed of 60 copies of each capsid protein and enclosing the viral positive strand RNA genome. Capsid protein VP1 mainly forms the vertices of the capsid. Capsid protein VP1 interacts with host integrin ITGAV/ITGB6 to provide virion attachment to target host cells. This attachment induces virion internalization. Tyrosine kinases are probably involved in the entry process. After binding to its receptor, the capsid undergoes conformational changes. Capsid protein VP1 N-terminus (that contains an amphipathic alpha-helix) and capsid protein VP4 are externalized. Together, they shape a pore in the host membrane through which viral genome is translocated to host cell cytoplasm. Forms an icosahedral capsid of pseudo T=3 symmetry with capsid proteins VP2 and VP3. The capsid is 300 Angstroms in diameter, composed of 60 copies of each capsid protein and enclosing the viral positive strand RNA genome. Functionally, lies on the inner surface of the capsid shell. After binding to the host receptor, the capsid undergoes conformational changes. Capsid protein VP4 is released, Capsid protein VP1 N-terminus is externalized, and together, they shape a pore in the host membrane through which the viral genome is translocated into the host cell cytoplasm. In terms of biological role, component of immature procapsids, which is cleaved into capsid proteins VP4 and VP2 after maturation. Allows the capsid to remain inactive before the maturation step. Its function is as follows. Cysteine protease that cleaves viral polyprotein and specific host proteins. It is responsible for the autocatalytic cleavage between the P1 and P2 regions, which is the first cleavage occurring in the polyprotein. Also cleaves the host translation initiation factor EIF4G1, in order to shut down the capped cellular mRNA translation. Inhibits the host nucleus-cytoplasm protein and RNA trafficking by cleaving host members of the nuclear pores. Counteracts stress granule formation probably by antagonizing its assembly or promoting its dissassembly. Cleaves and inhibits host IFIH1/MDA5, thereby inhibiting the type-I IFN production and the establishment of the antiviral state. Cleaves and inhibits host MAVS, thereby inhibiting the type-I IFN production and the establishment of the antiviral state. Plays an essential role in the virus replication cycle by acting as a viroporin. Creates a pore in the host endoplasmic reticulum and as a consequence releases Ca2+ in the cytoplasm of infected cell. In turn, high levels of cytoplasmic calcium may trigger membrane trafficking and transport of viral ER-associated proteins to viroplasms, sites of viral genome replication. Functionally, induces and associates with structural rearrangements of intracellular membranes. Displays RNA-binding, nucleotide binding and NTPase activities. May play a role in virion morphogenesis and viral RNA encapsidation by interacting with the capsid protein VP3. In terms of biological role, localizes the viral replication complex to the surface of membranous vesicles. Together with protein 3CD binds the Cis-Active RNA Element (CRE) which is involved in RNA synthesis initiation. Acts as a cofactor to stimulate the activity of 3D polymerase, maybe through a nucleid acid chaperone activity. Its function is as follows. Localizes the viral replication complex to the surface of membranous vesicles. It inhibits host cell endoplasmic reticulum-to-Golgi apparatus transport and causes the disassembly of the Golgi complex, possibly through GBF1 interaction. This would result in depletion of MHC, trail receptors and IFN receptors at the host cell surface. Plays an essential role in viral RNA replication by recruiting ACBD3 and PI4KB at the viral replication sites, thereby allowing the formation of the rearranged membranous structures where viral replication takes place. Acts as a primer for viral RNA replication and remains covalently bound to viral genomic RNA. VPg is uridylylated prior to priming replication into VPg-pUpU. The oriI viral genomic sequence may act as a template for this. The VPg-pUpU is then used as primer on the genomic RNA poly(A) by the RNA-dependent RNA polymerase to replicate the viral genome. During genome replication, the VPg-RNA linkage is removed by the host TDP2, thereby accelerating replication. During the late stage of the replication cycle, host TDP2 is excluded from sites of viral RNA synthesis and encapsidation, allowing for the generation of progeny virions. Functionally, involved in the viral replication complex and viral polypeptide maturation. It exhibits protease activity with a specificity and catalytic efficiency that is different from protease 3C. Protein 3CD lacks polymerase activity. Protein 3CD binds to the 5'UTR of the viral genome. In terms of biological role, replicates the viral genomic RNA on the surface of intracellular membranes. May form linear arrays of subunits that propagate along a strong head-to-tail interaction called interface-I. Covalently attaches UMP to a tyrosine of VPg, which is used to prime RNA synthesis. The positive stranded RNA genome is first replicated at virus induced membranous vesicles, creating a dsRNA genomic replication form. This dsRNA is then used as template to synthesize positive stranded RNA genomes. ss(+)RNA genomes are either translated, replicated or encapsidated. Its function is as follows. Major viral protease that mediates proteolytic processing of the polyprotein. Cleaves host EIF5B, contributing to host translation shutoff. Also cleaves host PABPC1, contributing to host translation shutoff. Cleaves host NLRP1, triggers host N-glycine-mediated degradation of the autoinhibitory NLRP1 N-terminal fragment. The protein is Genome polyprotein of Coxsackievirus A9 (strain Griggs).